Here is a 165-residue protein sequence, read N- to C-terminus: Endoribonuclease YbeY (165 aa).

Residues His131, His135, and His141 each contribute to the Zn(2+) site.

Belongs to the endoribonuclease YbeY family. Requires Zn(2+) as cofactor.

Its subcellular location is the cytoplasm. Single strand-specific metallo-endoribonuclease involved in late-stage 70S ribosome quality control and in maturation of the 3' terminus of the 16S rRNA. The protein is Endoribonuclease YbeY of Lachnoclostridium phytofermentans (strain ATCC 700394 / DSM 18823 / ISDg) (Clostridium phytofermentans).